Reading from the N-terminus, the 366-residue chain is NAD(P)H-quinone oxidoreductase subunit 1, chloroplastic (366 aa).

7 consecutive transmembrane segments (helical) span residues 28–48 (IWLL…VLVI), 105–125 (IAVI…HLVL), 128–148 (LSIG…GLLM), 250–270 (SGIK…VSSL), 271–291 (FVTV…FIFI), 303–323 (IFGM…FLFI), and 346–366 (FLLP…LLSL).

It belongs to the complex I subunit 1 family. As to quaternary structure, NDH is composed of at least 16 different subunits, 5 of which are encoded in the nucleus.

It is found in the plastid. It localises to the chloroplast thylakoid membrane. It carries out the reaction a plastoquinone + NADH + (n+1) H(+)(in) = a plastoquinol + NAD(+) + n H(+)(out). The enzyme catalyses a plastoquinone + NADPH + (n+1) H(+)(in) = a plastoquinol + NADP(+) + n H(+)(out). Its function is as follows. NDH shuttles electrons from NAD(P)H:plastoquinone, via FMN and iron-sulfur (Fe-S) centers, to quinones in the photosynthetic chain and possibly in a chloroplast respiratory chain. The immediate electron acceptor for the enzyme in this species is believed to be plastoquinone. Couples the redox reaction to proton translocation, and thus conserves the redox energy in a proton gradient. This Nandina domestica (Heavenly bamboo) protein is NAD(P)H-quinone oxidoreductase subunit 1, chloroplastic.